The chain runs to 471 residues: Tryptophanase (471 aa).

N6-acetyllysine occurs at positions 5, 115, and 156. An N6-(pyridoxal phosphate)lysine modification is found at Lys-270. Lys-450 is modified (N6-acetyllysine).

It belongs to the beta-eliminating lyase family. As to quaternary structure, homotetramer. The cofactor is pyridoxal 5'-phosphate.

It carries out the reaction L-tryptophan + H2O = indole + pyruvate + NH4(+). The protein operates within amino-acid degradation; L-tryptophan degradation via pyruvate pathway; indole and pyruvate from L-tryptophan: step 1/1. This is Tryptophanase from Shigella boydii serotype 18 (strain CDC 3083-94 / BS512).